Here is a 437-residue protein sequence, read N- to C-terminus: Probable exopolygalacturonase C (437 aa).

An N-terminal signal peptide occupies residues 1-21 (MLITKTAFLAFLLSSVPLAHG). N25, N42, N82, N99, and N149 each carry an N-linked (GlcNAc...) asparagine glycan. PbH1 repeat units follow at residues 215 to 236 (GTNIRISDSIMYNGDDAIAVGS) and 238 to 259 (SHNIVFERNTIGYQSHGMSIGS). Residue D229 is the Proton donor of the active site. H253 is an active-site residue. N-linked (GlcNAc...) asparagine glycosylation occurs at N269. PbH1 repeat units follow at residues 270-291 (ITNLRFEDVTVIDALYAARFKS) and 299-320 (VKNVTWKNIRVYNVTFPIFVTQ). N-linked (GlcNAc...) asparagine glycans are attached at residues N301 and N311. An intrachain disulfide couples C386 to C392. N428 and N431 each carry an N-linked (GlcNAc...) asparagine glycan.

This sequence belongs to the glycosyl hydrolase 28 family.

It is found in the secreted. It carries out the reaction [(1-&gt;4)-alpha-D-galacturonosyl](n) + H2O = alpha-D-galacturonate + [(1-&gt;4)-alpha-D-galacturonosyl](n-1). Its function is as follows. Specific in hydrolyzing the terminal glycosidic bond of polygalacturonic acid and oligogalacturonates. The polypeptide is Probable exopolygalacturonase C (pgxC) (Aspergillus flavus (strain ATCC 200026 / FGSC A1120 / IAM 13836 / NRRL 3357 / JCM 12722 / SRRC 167)).